The following is a 503-amino-acid chain: ATP synthase subunit beta (503 aa).

157 to 164 (GGAGVGKT) is a binding site for ATP.

It belongs to the ATPase alpha/beta chains family. In terms of assembly, F-type ATPases have 2 components, CF(1) - the catalytic core - and CF(0) - the membrane proton channel. CF(1) has five subunits: alpha(3), beta(3), gamma(1), delta(1), epsilon(1). CF(0) has three main subunits: a(1), b(2) and c(9-12). The alpha and beta chains form an alternating ring which encloses part of the gamma chain. CF(1) is attached to CF(0) by a central stalk formed by the gamma and epsilon chains, while a peripheral stalk is formed by the delta and b chains.

It is found in the cell inner membrane. It carries out the reaction ATP + H2O + 4 H(+)(in) = ADP + phosphate + 5 H(+)(out). Produces ATP from ADP in the presence of a proton gradient across the membrane. The catalytic sites are hosted primarily by the beta subunits. The polypeptide is ATP synthase subunit beta (Flavobacterium psychrophilum (strain ATCC 49511 / DSM 21280 / CIP 103535 / JIP02/86)).